The primary structure comprises 287 residues: Pyridoxal kinase PdxY (287 aa).

Residues serine 10 and 45 to 46 (TQ) each bind substrate. ATP is bound by residues aspartate 112, alanine 144, glutamate 149, lysine 182, and 209-212 (RPLV). A substrate-binding site is contributed by aspartate 224.

This sequence belongs to the pyridoxine kinase family. PdxY subfamily. In terms of assembly, homodimer. Requires Mg(2+) as cofactor.

The enzyme catalyses pyridoxal + ATP = pyridoxal 5'-phosphate + ADP + H(+). It functions in the pathway cofactor metabolism; pyridoxal 5'-phosphate salvage; pyridoxal 5'-phosphate from pyridoxal: step 1/1. Pyridoxal kinase involved in the salvage pathway of pyridoxal 5'-phosphate (PLP). Catalyzes the phosphorylation of pyridoxal to PLP. The sequence is that of Pyridoxal kinase PdxY from Escherichia coli (strain UTI89 / UPEC).